We begin with the raw amino-acid sequence, 250 residues long: Triosephosphate isomerase (250 aa).

9 to 11 (NWK) lines the substrate pocket. The Electrophile role is filled by His-95. Catalysis depends on Glu-167, which acts as the Proton acceptor. Substrate-binding positions include Gly-173, Ser-212, and 233–234 (GG).

This sequence belongs to the triosephosphate isomerase family. In terms of assembly, homodimer.

Its subcellular location is the cytoplasm. The catalysed reaction is D-glyceraldehyde 3-phosphate = dihydroxyacetone phosphate. It functions in the pathway carbohydrate biosynthesis; gluconeogenesis. Its pathway is carbohydrate degradation; glycolysis; D-glyceraldehyde 3-phosphate from glycerone phosphate: step 1/1. In terms of biological role, involved in the gluconeogenesis. Catalyzes stereospecifically the conversion of dihydroxyacetone phosphate (DHAP) to D-glyceraldehyde-3-phosphate (G3P). This is Triosephosphate isomerase from Endomicrobium trichonymphae.